The primary structure comprises 39 residues: Conotoxin Cl14.7 (39 aa).

The propeptide occupies 1-15 (MGDLSEADSMKHQLQ).

In terms of processing, contains 2 disulfide bonds. In terms of tissue distribution, expressed by the venom duct.

The protein localises to the secreted. This Californiconus californicus (California cone) protein is Conotoxin Cl14.7.